Here is a 209-residue protein sequence, read N- to C-terminus: Thymidine kinase (209 aa).

Residues 25 to 32 (GCMFAGKT) and 103 to 106 (DEVQ) each bind ATP. Residue Glu104 is the Proton acceptor of the active site. Zn(2+)-binding residues include Cys160, Cys163, Cys198, and Cys201.

It belongs to the thymidine kinase family. As to quaternary structure, homotetramer.

The protein resides in the cytoplasm. The catalysed reaction is thymidine + ATP = dTMP + ADP + H(+). The protein is Thymidine kinase of Mycoplasma capricolum subsp. capricolum (strain California kid / ATCC 27343 / NCTC 10154).